The sequence spans 339 residues: Anthranilate phosphoribosyltransferase (339 aa).

5-phospho-alpha-D-ribose 1-diphosphate is bound by residues Gly-80, 83 to 84 (GD), 90 to 93 (NVST), 108 to 116 (KHGNRSVTS), and Ser-120. An anthranilate-binding site is contributed by Gly-80. Position 92 (Ser-92) interacts with Mg(2+). Asn-111 lines the anthranilate pocket. Position 166 (Arg-166) interacts with anthranilate. Mg(2+) is bound by residues Asp-225 and Glu-226.

This sequence belongs to the anthranilate phosphoribosyltransferase family. Homodimer. The cofactor is Mg(2+).

The catalysed reaction is N-(5-phospho-beta-D-ribosyl)anthranilate + diphosphate = 5-phospho-alpha-D-ribose 1-diphosphate + anthranilate. The protein operates within amino-acid biosynthesis; L-tryptophan biosynthesis; L-tryptophan from chorismate: step 2/5. In terms of biological role, catalyzes the transfer of the phosphoribosyl group of 5-phosphorylribose-1-pyrophosphate (PRPP) to anthranilate to yield N-(5'-phosphoribosyl)-anthranilate (PRA). The sequence is that of Anthranilate phosphoribosyltransferase from Ignicoccus hospitalis (strain KIN4/I / DSM 18386 / JCM 14125).